The sequence spans 171 residues: uncharacterized protein (171 aa).

The protein belongs to the mimivirus R24/R907 family.

This is an uncharacterized protein from Acanthamoeba polyphaga (Amoeba).